A 533-amino-acid polypeptide reads, in one-letter code: Metal transporter nramp1 homolog (533 aa).

Residues 1–33 form a disordered region; sequence MTPRIESEESAPLVNKNNNNNNDNNNNNNVDEE. The Cytoplasmic portion of the chain corresponds to 1 to 68; that stretch reads MTPRIESEES…PNIDKPDSKW (68 aa). A compositionally biased stretch (low complexity) spans 14–29; sequence VNKNNNNNNDNNNNNN. Residues 69–89 form a helical membrane-spanning segment; it reads INFKTLWAFTGPGFLMSIAYL. The Extracellular segment spans residues 90–101; it reads DPGNLESDIQAG. Residues 102–122 form a helical membrane-spanning segment; it reads AMAGYQLLWVLFWSTVIGFWL. The Cytoplasmic portion of the chain corresponds to 123 to 158; the sequence is QMLASRLGVVTGKHLAEHCREQYPKTPRLLLWLMTE. The helical transmembrane segment at 159-179 threads the bilayer; sequence LAIIGSDIQEVIGTAIALQIL. Residues 180 to 182 lie on the Extracellular side of the membrane; it reads SNG. A helical membrane pass occupies residues 183 to 203; that stretch reads HIPLWAGVLFTAADTFTFLFL. Residues 204–212 lie on the Cytoplasmic side of the membrane; that stretch reads EKYGIRKLE. Residues 213–233 form a helical membrane-spanning segment; that stretch reads AFFCSLIAIMAISFGVEYIIS. At 234–256 the chain is on the extracellular side; sequence KPDQIEVVKGVFIPLCSQNNISQ. Asn253 carries N-linked (GlcNAc...) asparagine glycosylation. A helical membrane pass occupies residues 257–277; it reads AVGILGAVVMPHNIYLHSALV. At 278 to 302 the chain is on the cytoplasmic side; the sequence is QSREIDRKSETQVKIANKYNRLESA. Residues 303–323 traverse the membrane as a helical segment; sequence FALIISFIINLLLVSVFAKGF. The Extracellular segment spans residues 324 to 348; it reads YGETTEIGLSSAADFLMDKYGKVAK. A helical membrane pass occupies residues 349 to 368; that stretch reads YIWAIGLFSAGQCSTMTGTY. Residues 369 to 387 lie on the Cytoplasmic side of the membrane; that stretch reads SGQFVMEGFLKLKIAPWKR. Residues 388-408 traverse the membrane as a helical segment; that stretch reads LLITRCTAIVPAMVVAILSTS. Topologically, residues 409–415 are extracellular; sequence HLDSLDQ. The helical transmembrane segment at 416–436 threads the bilayer; that stretch reads WLNILQSIQLPFAVVPVLLFT. Residues 437–457 are Cytoplasmic-facing; it reads SSEKIMGSKFKNHWLNNQFVR. A helical transmembrane segment spans residues 458–478; that stretch reads FLSLLIIAINIYLIITFSMQI. At 479–481 the chain is on the extracellular side; sequence SES. The helical transmembrane segment at 482 to 502 threads the bilayer; that stretch reads AWMISIVSISFFFYFIFIVYL. Over 503 to 533 the chain is Cytoplasmic; that stretch reads SMGQENFNSMTKKIKNLFNNNSNQTYNNINY.

It belongs to the NRAMP family.

The protein localises to the membrane. Depletes iron from the phagolysosome in an ATP-dependent process. May rather act as a symporter of protons and metal cations in an ATP-dependent process. Nramp1 overexpression protected cells from L.pneumophila infection. The polypeptide is Metal transporter nramp1 homolog (nramp1) (Dictyostelium discoideum (Social amoeba)).